A 380-amino-acid chain; its full sequence is Alcohol dehydrogenase 2 (380 aa).

8 residues coordinate Zn(2+): Cys48, Thr50, His70, Cys100, Cys103, Cys106, Cys114, and Cys178. Residues Thr50 and His70 each contribute to the an alcohol site. An NAD(+)-binding site is contributed by Thr50. NAD(+)-binding positions include 203 to 208 (GLGAVG), Asp227, Arg232, Thr273, Val296, 296 to 298 (VGV), Phe323, and Arg373.

This sequence belongs to the zinc-containing alcohol dehydrogenase family. Homodimer. Homotetramer. The cofactor is Zn(2+).

It is found in the cytoplasm. The enzyme catalyses a primary alcohol + NAD(+) = an aldehyde + NADH + H(+). It catalyses the reaction a secondary alcohol + NAD(+) = a ketone + NADH + H(+). The polypeptide is Alcohol dehydrogenase 2 (ADH2) (Solanum tuberosum (Potato)).